A 267-amino-acid polypeptide reads, in one-letter code: 2-keto-3-deoxy-L-rhamnonate aldolase (267 aa).

The active-site Proton acceptor is the histidine 49. Substrate is bound at residue glutamine 151. Glutamate 153 provides a ligand contact to Mg(2+). Residues alanine 178 and aspartate 179 each contribute to the substrate site. Aspartate 179 contacts Mg(2+).

This sequence belongs to the HpcH/HpaI aldolase family. KDR aldolase subfamily. Homohexamer. Requires Mg(2+) as cofactor.

The enzyme catalyses 2-dehydro-3-deoxy-L-rhamnonate = (S)-lactaldehyde + pyruvate. Catalyzes the reversible retro-aldol cleavage of 2-keto-3-deoxy-L-rhamnonate (KDR) to pyruvate and lactaldehyde. The sequence is that of 2-keto-3-deoxy-L-rhamnonate aldolase from Shigella boydii serotype 4 (strain Sb227).